The following is a 161-amino-acid chain: Nucleotide-binding protein Csal_2524 (161 aa).

This sequence belongs to the YajQ family.

Its function is as follows. Nucleotide-binding protein. This chain is Nucleotide-binding protein Csal_2524, found in Chromohalobacter salexigens (strain ATCC BAA-138 / DSM 3043 / CIP 106854 / NCIMB 13768 / 1H11).